A 35-amino-acid chain; its full sequence is Photosystem II reaction center protein T (35 aa).

The helical transmembrane segment at 3–23 (ALVYTFLLVSTLGILFFAIFF) threads the bilayer.

It belongs to the PsbT family. As to quaternary structure, PSII is composed of 1 copy each of membrane proteins PsbA, PsbB, PsbC, PsbD, PsbE, PsbF, PsbH, PsbI, PsbJ, PsbK, PsbL, PsbM, PsbT, PsbY, PsbZ, Psb30/Ycf12, at least 3 peripheral proteins of the oxygen-evolving complex and a large number of cofactors. It forms dimeric complexes.

It localises to the plastid. The protein localises to the chloroplast thylakoid membrane. Found at the monomer-monomer interface of the photosystem II (PS II) dimer, plays a role in assembly and dimerization of PSII. PSII is a light-driven water plastoquinone oxidoreductase, using light energy to abstract electrons from H(2)O, generating a proton gradient subsequently used for ATP formation. This chain is Photosystem II reaction center protein T, found in Gnetum gnemon (Spanish joint-fir).